The chain runs to 601 residues: Ubiquilin-4 (601 aa).

The region spanning 13–87 (IRVTVKTPKD…VHLVIKTPQK (75 aa)) is the Ubiquitin-like domain. Residues lysine 23 and lysine 62 each participate in a glycyl lysine isopeptide (Lys-Gly) (interchain with G-Cter in SUMO2) cross-link. Positions 87-155 (KAQDPAAATA…GAGEGSPSAT (69 aa)) are disordered. The segment covering 88-138 (AQDPAAATASSPSTPDPASAPSTTPASPATPAQPSTSGSASSDAGSGSRRS) has biased composition (low complexity). A phosphoserine mark is found at serine 98 and serine 144. The span at 139–149 (SGGGPSPGAGE) shows a compositional bias: gly residues. STI1 domains follow at residues 192–229 (NPEMLSQIMENPLVQDMMSNPDLMRHMIMANPQMQQLM) and 230–261 (ERNPEISHMLNNPELMRQTMELARNPAMMQEM). Threonine 287 carries the post-translational modification Phosphothreonine. The tract at residues 301–366 (FGNNPFSSLA…QVHPTVSNPF (66 aa)) is disordered. Residues 307 to 318 (SSLAGNSDSSSS) are compositionally biased toward low complexity. A Phosphoserine; by ATM modification is found at serine 318. The span at 329 to 340 (LPNPWSPSPPTS) shows a compositional bias: pro residues. A compositionally biased stretch (gly residues) spans 344-354 (GSGGEGTGGSG). Polar residues predominate over residues 357 to 366 (QVHPTVSNPF). 2 consecutive STI1 domains span residues 393–440 (NPQL…QEQL) and 444–476 (LPVFLQQMQNPESLSILTNPRAMQALLQIQQGL). The segment at 490–533 (LGSFGISRTPAPSAGSNAGSTPEAPTSSPATPATSSPTGASSAQ) is disordered. Over residues 507 to 533 (AGSTPEAPTSSPATPATSSPTGASSAQ) the composition is skewed to low complexity. The 46-residue stretch at 553 to 598 (QTPEVRFQQQLEQLNSMGFINREANLQALIATGGDINAAIERLLGS) folds into the UBA domain.

Homooligomer. Binds signal sequences of proteins that are targeted to the endoplasmic reticulum. Interacts (via UBA domain) with GJA1 (not ubiquitinated) and with ubiquitin; both compete for the same binding site. Interacts (via UBA domain) with ubiquitin and with polyubiquitin chains. Interacts (via ubiquitin-like domain) with PSMD2 and PSMD4, regulatory subunits of the 26S proteasome. Interacts with ATXN1/SCA1; interaction with ATXN1 inhibits polyubiquitination of UBQLN4 and interferes with PSMD4 binding. Interacts with HERPUD1. Interacts (via ubiquitin-like domain) with UBQLN1 (via UBA domain). Interacts with UBQLN2. Interacts (via STI1 1 and 2 domains) with MAP1LC3A/B/C. Interacts with BAG6. Interacts with MRE11 (when ubiquitinated); interaction with ubiquitinated MRE11 leads to MRE11 removal from chromatin. Interacts with DESI1/POST; leading to nuclear export. Interacts with BCL2A1 and BCL2L10. As to quaternary structure, (Microbial infection) Interacts with Mumps virus protein SH. Post-translationally, phosphorylated by ATM at Ser-318 in response to DNA damage, leading to localization in the nucleus and recruitment to sites of DNA damage. Ubiquitinated; this does not lead to proteasomal degradation. May undergo both 'Lys-48'- and 'Lys-63'-linked polyubiquitination. As to expression, highly expressed in pancreas, kidney, skeletal muscle, heart and throughout the brain, and at lower levels in placenta, lung and liver.

The protein resides in the nucleus. It localises to the cytoplasm. The protein localises to the chromosome. It is found in the endoplasmic reticulum. Its subcellular location is the perinuclear region. The protein resides in the cytoplasmic vesicle. It localises to the autophagosome. Its function is as follows. Regulator of protein degradation that mediates the proteasomal targeting of misfolded, mislocalized or accumulated proteins. Acts by binding polyubiquitin chains of target proteins via its UBA domain and by interacting with subunits of the proteasome via its ubiquitin-like domain. Key regulator of DNA repair that represses homologous recombination repair: in response to DNA damage, recruited to sites of DNA damage following phosphorylation by ATM and acts by binding and removing ubiquitinated MRE11 from damaged chromatin, leading to MRE11 degradation by the proteasome. MRE11 degradation prevents homologous recombination repair, redirecting double-strand break repair toward non-homologous end joining (NHEJ). Specifically recognizes and binds mislocalized transmembrane-containing proteins and targets them to proteasomal degradation. Collaborates with DESI1/POST in the export of ubiquitinated proteins from the nucleus to the cytoplasm. Also plays a role in the regulation of the proteasomal degradation of non-ubiquitinated GJA1. Acts as an adapter protein that recruits UBQLN1 to the autophagy machinery. Mediates the association of UBQLN1 with autophagosomes and the autophagy-related protein LC3 (MAP1LC3A/B/C) and may assist in the maturation of autophagosomes to autolysosomes by mediating autophagosome-lysosome fusion. The chain is Ubiquilin-4 from Homo sapiens (Human).